The sequence spans 160 residues: uncharacterized protein (160 aa).

3 consecutive C2H2-type zinc fingers follow at residues 10–32, 41–64, and 75–98; these read LSCL…LPTH, QTCD…KRYH, and FQCQ…KIEH. Y115 is subject to Phosphotyrosine. Position 116 is a phosphoserine (S116).

The protein resides in the nucleus. Functionally, may be involved in transcriptional regulation. This is an uncharacterized protein from Drosophila melanogaster (Fruit fly).